The sequence spans 114 residues: Vacuolar morphogenesis protein 10 (114 aa).

The protein resides in the vacuole membrane. Its function is as follows. Required for vacuolar fusion. Involved in the early steps of the fusion pathway. This is Vacuolar morphogenesis protein 10 (VAM10) from Saccharomyces cerevisiae (strain ATCC 204508 / S288c) (Baker's yeast).